The primary structure comprises 700 residues: Elongation factor G (700 aa).

The tr-type G domain maps to 8-290 (ERYRNIGISA…AVVEYLPSPV (283 aa)). Residues 17-24 (AHIDAGKT), 88-92 (DTPGH), and 142-145 (NKMD) each bind GTP.

The protein belongs to the TRAFAC class translation factor GTPase superfamily. Classic translation factor GTPase family. EF-G/EF-2 subfamily.

It localises to the cytoplasm. Its function is as follows. Catalyzes the GTP-dependent ribosomal translocation step during translation elongation. During this step, the ribosome changes from the pre-translocational (PRE) to the post-translocational (POST) state as the newly formed A-site-bound peptidyl-tRNA and P-site-bound deacylated tRNA move to the P and E sites, respectively. Catalyzes the coordinated movement of the two tRNA molecules, the mRNA and conformational changes in the ribosome. This chain is Elongation factor G, found in Mannheimia succiniciproducens (strain KCTC 0769BP / MBEL55E).